The sequence spans 138 residues: Acidic phospholipase A2 RV-7 (138 aa).

The first 16 residues, 1–16 (MRTLWIVAVCLIGVEG), serve as a signal peptide directing secretion. 7 disulfides stabilise this stretch: C42–C131, C44–C60, C59–C111, C65–C138, C66–C104, C73–C97, and C91–C102. Residues Y43, G45, and G47 each contribute to the Ca(2+) site. H63 is an active-site residue. D64 contributes to the Ca(2+) binding site. D105 is an active-site residue.

It belongs to the phospholipase A2 family. Group II subfamily. D49 sub-subfamily. Heterodimer of a weakly toxic basic protein having phospholipase A2 activity (RV-4) and a non-toxic acidic protein which inhibits its enzymatic activity but potentiates its lethal potency and neurotoxicity (RV-7). Ca(2+) serves as cofactor. Expressed by the venom gland.

The protein resides in the secreted. It carries out the reaction a 1,2-diacyl-sn-glycero-3-phosphocholine + H2O = a 1-acyl-sn-glycero-3-phosphocholine + a fatty acid + H(+). Its function is as follows. Heterodimer: RV-4/RV-7 targets the presynaptic sites of the neuromuscular junction. Functionally, monomer: snake venom phospholipase A2 (PLA2) RV-7 that has low enzymatic activity and is not toxic. It inhibits the enzymatic activity of RV-4 in vitro but potentiates its lethal potency and neurotoxicity. It may facilitate the specific binding of RV-4 to its presynaptic binding sites, probably by acting as a chaperone, minimizing distraction and destruction of RV-4 en route to the site of action by reducing non-specific binding to muscle and other organs. PLA2 catalyzes the calcium-dependent hydrolysis of the 2-acyl groups in 3-sn-phosphoglycerides. The chain is Acidic phospholipase A2 RV-7 from Daboia siamensis (Eastern Russel's viper).